Here is a 469-residue protein sequence, read N- to C-terminus: Uronate isomerase (469 aa).

The protein belongs to the metallo-dependent hydrolases superfamily. Uronate isomerase family.

The catalysed reaction is D-glucuronate = D-fructuronate. It catalyses the reaction aldehydo-D-galacturonate = keto-D-tagaturonate. It functions in the pathway carbohydrate metabolism; pentose and glucuronate interconversion. In Edwardsiella ictaluri (strain 93-146), this protein is Uronate isomerase.